The chain runs to 465 residues: Ribulose bisphosphate carboxylase large chain (465 aa).

Lysine 4 is modified (N6,N6,N6-trimethyllysine). Residues asparagine 113 and threonine 163 each coordinate substrate. Residue lysine 165 is the Proton acceptor of the active site. A substrate-binding site is contributed by lysine 167. Residues lysine 191, aspartate 193, and glutamate 194 each contribute to the Mg(2+) site. Residue lysine 191 is modified to N6-carboxylysine. Histidine 284 (proton acceptor) is an active-site residue. Substrate is bound by residues arginine 285, histidine 317, and serine 369.

It belongs to the RuBisCO large chain family. Type I subfamily. Heterohexadecamer of 8 large chains and 8 small chains; disulfide-linked. The disulfide link is formed within the large subunit homodimers. It depends on Mg(2+) as a cofactor. The disulfide bond which can form in the large chain dimeric partners within the hexadecamer appears to be associated with oxidative stress and protein turnover.

The protein localises to the plastid. The protein resides in the chloroplast. It carries out the reaction 2 (2R)-3-phosphoglycerate + 2 H(+) = D-ribulose 1,5-bisphosphate + CO2 + H2O. The enzyme catalyses D-ribulose 1,5-bisphosphate + O2 = 2-phosphoglycolate + (2R)-3-phosphoglycerate + 2 H(+). Its function is as follows. RuBisCO catalyzes two reactions: the carboxylation of D-ribulose 1,5-bisphosphate, the primary event in carbon dioxide fixation, as well as the oxidative fragmentation of the pentose substrate in the photorespiration process. Both reactions occur simultaneously and in competition at the same active site. The sequence is that of Ribulose bisphosphate carboxylase large chain from Combretum indicum (Rangoon creeper).